We begin with the raw amino-acid sequence, 82 residues long: MKLTCMMIVAVLFLTAWTFVTADDSRNGLENLSPKARHEMKNPEASKSNKRYECYSTGTFCGINGGLCCSNLCLFFVCLTFS.

An N-terminal signal peptide occupies residues 1 to 22 (MKLTCMMIVAVLFLTAWTFVTA). Positions 23-49 (DDSRNGLENLSPKARHEMKNPEASKSN) are excised as a propeptide. 3 disulfide bridges follow: Cys54–Cys69, Cys61–Cys73, and Cys68–Cys78.

It belongs to the conotoxin O1 superfamily. In terms of tissue distribution, expressed by the venom duct.

The protein resides in the secreted. Delta-conotoxins bind to site 6 of voltage-gated sodium channels (Nav) and inhibit the inactivation process. In Conus consors (Singed cone), this protein is Delta-conotoxin-like CnVIA.